Reading from the N-terminus, the 165-residue chain is Lipoprotein signal peptidase (165 aa).

2 helical membrane passes run P68 to G88 and G100 to I120. Catalysis depends on residues D121 and D137. Residues F130–A150 form a helical membrane-spanning segment.

The protein belongs to the peptidase A8 family.

It localises to the cell inner membrane. It catalyses the reaction Release of signal peptides from bacterial membrane prolipoproteins. Hydrolyzes -Xaa-Yaa-Zaa-|-(S,diacylglyceryl)Cys-, in which Xaa is hydrophobic (preferably Leu), and Yaa (Ala or Ser) and Zaa (Gly or Ala) have small, neutral side chains.. It functions in the pathway protein modification; lipoprotein biosynthesis (signal peptide cleavage). Functionally, this protein specifically catalyzes the removal of signal peptides from prolipoproteins. The chain is Lipoprotein signal peptidase from Acaryochloris marina (strain MBIC 11017).